The primary structure comprises 179 residues: Large ribosomal subunit protein uL5 (179 aa).

Belongs to the universal ribosomal protein uL5 family. Part of the 50S ribosomal subunit; part of the 5S rRNA/L5/L18/L25 subcomplex. Contacts the 5S rRNA and the P site tRNA. Forms a bridge to the 30S subunit in the 70S ribosome.

In terms of biological role, this is one of the proteins that bind and probably mediate the attachment of the 5S RNA into the large ribosomal subunit, where it forms part of the central protuberance. In the 70S ribosome it contacts protein S13 of the 30S subunit (bridge B1b), connecting the 2 subunits; this bridge is implicated in subunit movement. Contacts the P site tRNA; the 5S rRNA and some of its associated proteins might help stabilize positioning of ribosome-bound tRNAs. In Stutzerimonas stutzeri (strain A1501) (Pseudomonas stutzeri), this protein is Large ribosomal subunit protein uL5.